Consider the following 375-residue polypeptide: Serine protease 23 (375 aa).

Positions 1-23 (MAGTPGHPIFLLLLLRAIGQVSP) are cleaved as a signal peptide. An N-linked (GlcNAc...) asparagine glycan is attached at Asn93. Residues Cys153 and Cys169 are joined by a disulfide bond. The active-site Charge relay system is the His168. Residue Asn199 is glycosylated (N-linked (GlcNAc...) asparagine). Residues Asp232 and Ser308 each act as charge relay system in the active site.

The protein belongs to the peptidase S1 family.

It is found in the secreted. The sequence is that of Serine protease 23 (PRSS23) from Bos taurus (Bovine).